The following is a 1402-amino-acid chain: Roundabout homolog 3 (1402 aa).

A signal peptide spans 1–20 (MLRYLLKTLLQMNLFADSLA). Residues 21–891 (RDISNSSELL…ERLAKVLRKP (871 aa)) lie on the Extracellular side of the membrane. Residues Asn-25, Asn-34, and Asn-53 are each glycosylated (N-linked (GlcNAc...) asparagine). 5 consecutive Ig-like C2-type domains span residues 64–160 (PRIV…ASLE), 166–253 (DDFR…AELV), 258–342 (PSFL…GSLS), 347–440 (PQFV…ALLE), and 450–531 (PPII…GEAT). Cys-85 and Cys-143 are oxidised to a cystine. The N-linked (GlcNAc...) asparagine glycan is linked to Asn-156. Cystine bridges form between Cys-187–Cys-236 and Cys-279–Cys-326. Residues Asn-355, Asn-363, Asn-410, Asn-459, and Asn-503 are each glycosylated (N-linked (GlcNAc...) asparagine). Cys-368 and Cys-424 form a disulfide bridge. The cysteines at positions 472 and 521 are disulfide-linked. Disordered stretches follow at residues 540–561 (EDWG…PPSQ) and 639–662 (EPSP…EDPW). Residues 543 to 552 (GASPGPATGP) are compositionally biased toward low complexity. Fibronectin type-III domains follow at residues 558-652 (PPSQ…TQDS), 672-766 (AVRM…IPEE), and 771-869 (PPQG…FPPA). Polar residues predominate over residues 646-655 (PVQTQDSSLS). 3 N-linked (GlcNAc...) asparagine glycosylation sites follow: Asn-784, Asn-813, and Asn-820. Residues 892 to 912 (AFLAGSSAACGALLLGFCAAL) form a helical membrane-spanning segment. The Cytoplasmic segment spans residues 913–1402 (YRRQKQRKEL…PGRNRREEPR (490 aa)). 3 disordered regions span residues 965 to 989 (SWPH…NPDP), 1032 to 1307 (FHGG…VVQA), and 1340 to 1402 (GRPS…EEPR). Polar residues-rich tracts occupy residues 1038 to 1049 (QHSSGDPSTWSQ) and 1142 to 1152 (PSPTSSYGQQS). Over residues 1158–1169 (PSPPDPPQPPTD) the composition is skewed to pro residues. Low complexity-rich tracts occupy residues 1178-1191 (RRVP…LSVS) and 1215-1228 (ASPS…SSAP). Basic residues predominate over residues 1243-1254 (HGHRARIRKKPK). Phosphoserine is present on Ser-1263. Basic and acidic residues predominate over residues 1294-1304 (LERERSGERRV). Residues 1346–1357 (SHGQGTSTCSTA) show a composition bias toward polar residues. The segment covering 1358-1371 (GSNSSRGSNSSRGS) has biased composition (low complexity).

The protein belongs to the immunoglobulin superfamily. ROBO family. Interacts (via Fibronectin type-III 1 domain) with NELL2 (via the EGF domains) with a 3:3 stoichiometry; this interaction promotes oligomerization of ROBO3 resulting in the repulsion of commissural axons in the midline. Detected in embryonal spinal cord and hindbrain.

Its subcellular location is the membrane. Its function is as follows. Receptor involved in axon guidance during development. Acts as a multifunctional regulator of pathfinding that simultaneously mediates NELL2 repulsion, inhibits SLIT repulsion, and facilitates Netrin-1/NTN1 attraction. In spinal cord development plays a role in guiding commissural axons probably by preventing premature sensitivity to Slit proteins thus inhibiting Slit signaling through ROBO1/ROBO2. Binding OF NELL2 to the receptor ROBO3 promotes oligomerization of ROBO3, resulting in the repulsion of commissural axons in the midline. ROBO3 also indirectly boosts axon attraction to NTN1 without interacting with NTN1 itself. Functionally, mediates NELL2 premature repulsion of commissural axons during midline crossing. In terms of biological role, after midline crossing by the commissural axons, may, in concert with ROBO1 and ROBO2, prevent midline recrossing. Does not mediate NELL2 signaling. The protein is Roundabout homolog 3 of Mus musculus (Mouse).